Consider the following 432-residue polypeptide: Glutamyl-tRNA reductase (432 aa).

Residues 49-52 (TCNR), Ser101, 106-108 (ESQ), and Gln112 contribute to the substrate site. Catalysis depends on Cys50, which acts as the Nucleophile. An NADP(+)-binding site is contributed by 181–186 (GTGETI). Residues 410–432 (KPGYHHPTLQTTIVKTDETDPAS) are disordered.

The protein belongs to the glutamyl-tRNA reductase family. As to quaternary structure, homodimer.

The enzyme catalyses (S)-4-amino-5-oxopentanoate + tRNA(Glu) + NADP(+) = L-glutamyl-tRNA(Glu) + NADPH + H(+). It functions in the pathway porphyrin-containing compound metabolism; protoporphyrin-IX biosynthesis; 5-aminolevulinate from L-glutamyl-tRNA(Glu): step 1/2. In terms of biological role, catalyzes the NADPH-dependent reduction of glutamyl-tRNA(Glu) to glutamate 1-semialdehyde (GSA). The polypeptide is Glutamyl-tRNA reductase (Xylella fastidiosa (strain 9a5c)).